Here is a 445-residue protein sequence, read N- to C-terminus: Glucose-6-phosphate isomerase (445 aa).

The active-site Proton donor is the Glu-287. Residues His-308 and Lys-422 contribute to the active site.

Belongs to the GPI family.

It localises to the cytoplasm. The catalysed reaction is alpha-D-glucose 6-phosphate = beta-D-fructose 6-phosphate. The protein operates within carbohydrate biosynthesis; gluconeogenesis. It participates in carbohydrate degradation; glycolysis; D-glyceraldehyde 3-phosphate and glycerone phosphate from D-glucose: step 2/4. Catalyzes the reversible isomerization of glucose-6-phosphate to fructose-6-phosphate. This is Glucose-6-phosphate isomerase from Bacteroides thetaiotaomicron (strain ATCC 29148 / DSM 2079 / JCM 5827 / CCUG 10774 / NCTC 10582 / VPI-5482 / E50).